Here is a 245-residue protein sequence, read N- to C-terminus: Oncostatin-M (245 aa).

The N-terminal stretch at 1–26 (MGAQRMQRTLLSLVLRLLLLCTVATG) is a signal peptide. Cystine bridges form between Cys-28–Cys-135 and Cys-71–Cys-177. A glycan (N-linked (GlcNAc...) asparagine) is linked at Asn-97. 2 disordered regions span residues 143 to 171 (SSDP…STFQ) and 197 to 245 (WGER…APAR). Over residues 153–166 (QPGPGPTPLPPTPP) the composition is skewed to pro residues. Over residues 203-218 (RSRRHSPCRALKRGAR) the composition is skewed to basic residues. The propeptide occupies 207–245 (HSPCRALKRGARRTQPFPEIRRLAPRGQPPGSLWGAPAR).

The protein belongs to the LIF/OSM family. In terms of processing, propeptide processing is not important for receptor binding activity but may be important growth-inhibitory activity.

It localises to the secreted. In terms of biological role, growth regulator. Inhibits the proliferation of a number of tumor cell lines. It regulates cytokine production, including IL-6, G-CSF and GM-CSF from endothelial cells. Uses both type I OSM receptor (heterodimers composed of LIFR and IL6ST) and type II OSM receptor (heterodimers composed of OSMR and IL6ST). Involved in the maturation of fetal hepatocytes, thereby promoting liver development and regeneration. In Bos taurus (Bovine), this protein is Oncostatin-M (OSM).